A 633-amino-acid polypeptide reads, in one-letter code: Phosphomethylpyrimidine synthase (633 aa).

Substrate is bound by residues N245, M274, Y303, H339, 359-361, 400-403, and E439; these read SRG and DGLR. H443 is a Zn(2+) binding site. Y466 lines the substrate pocket. Residue H507 coordinates Zn(2+). [4Fe-4S] cluster contacts are provided by C587, C590, and C595.

The protein belongs to the ThiC family. As to quaternary structure, homodimer. [4Fe-4S] cluster serves as cofactor.

The catalysed reaction is 5-amino-1-(5-phospho-beta-D-ribosyl)imidazole + S-adenosyl-L-methionine = 4-amino-2-methyl-5-(phosphooxymethyl)pyrimidine + CO + 5'-deoxyadenosine + formate + L-methionine + 3 H(+). It functions in the pathway cofactor biosynthesis; thiamine diphosphate biosynthesis. In terms of biological role, catalyzes the synthesis of the hydroxymethylpyrimidine phosphate (HMP-P) moiety of thiamine from aminoimidazole ribotide (AIR) in a radical S-adenosyl-L-methionine (SAM)-dependent reaction. The chain is Phosphomethylpyrimidine synthase from Neisseria meningitidis serogroup B (strain ATCC BAA-335 / MC58).